The following is a 209-amino-acid chain: MLGKGRPLVVRGRTVEQVWRQAVTGIKVHGEKVERERGPVKEVRGLIAHLEPSGPESFDIPDDYPLDEHSVRAYEDQLLDPELRGFEYTYGHRLRRYFGLDQVTKIVERLSESNNTRRAIAVTWDPRRDLDEEEVPCLTALQLQSDGGSGLELHAFYRSWDVGKALVANMIALRRLQEHVAERAGLEPTTLTVYAANAHVYEEDLPDLP.

The active site involves Cys137.

This sequence belongs to the thymidylate synthase family. Archaeal-type ThyA subfamily. In terms of assembly, monomer.

The protein resides in the cytoplasm. It functions in the pathway pyrimidine metabolism; dTTP biosynthesis. In terms of biological role, may catalyze the biosynthesis of dTMP using an unknown cosubstrate. The polypeptide is Putative thymidylate synthase (Methanopyrus kandleri (strain AV19 / DSM 6324 / JCM 9639 / NBRC 100938)).